Here is a 171-residue protein sequence, read N- to C-terminus: Small ribosomal subunit protein mS41 (171 aa).

The transit peptide at 1–23 (MSLFKSLVARSGSGIRAAQIARQ) directs the protein to the mitochondrion. The disordered stretch occupies residues 122-141 (REHKKGKKKNGGERNAKTVL).

It belongs to the mitochondrion-specific ribosomal protein mS41 family.

It is found in the mitochondrion. Functionally, involved in telomere length regulation. In Scheffersomyces stipitis (strain ATCC 58785 / CBS 6054 / NBRC 10063 / NRRL Y-11545) (Yeast), this protein is Small ribosomal subunit protein mS41 (FYV4).